We begin with the raw amino-acid sequence, 252 residues long: Protein A47 (252 aa).

The protein belongs to the orthopoxvirus A47 protein family.

The sequence is that of Protein A47 from Vaccinia virus (strain Western Reserve) (VACV).